Consider the following 601-residue polypeptide: Elongation factor 4 (601 aa).

The 183-residue stretch at 6 to 188 (NRIRNFCIIA…QVVTKIAPPK (183 aa)) folds into the tr-type G domain. GTP contacts are provided by residues 18–23 (DHGKST) and 135–138 (NKID).

It belongs to the TRAFAC class translation factor GTPase superfamily. Classic translation factor GTPase family. LepA subfamily.

The protein resides in the cell membrane. It catalyses the reaction GTP + H2O = GDP + phosphate + H(+). Its function is as follows. Required for accurate and efficient protein synthesis under certain stress conditions. May act as a fidelity factor of the translation reaction, by catalyzing a one-codon backward translocation of tRNAs on improperly translocated ribosomes. Back-translocation proceeds from a post-translocation (POST) complex to a pre-translocation (PRE) complex, thus giving elongation factor G a second chance to translocate the tRNAs correctly. Binds to ribosomes in a GTP-dependent manner. This chain is Elongation factor 4, found in Desulforamulus reducens (strain ATCC BAA-1160 / DSM 100696 / MI-1) (Desulfotomaculum reducens).